Here is a 209-residue protein sequence, read N- to C-terminus: UPF0174 protein HP_1587 (209 aa).

The protein belongs to the UPF0174 family.

This Helicobacter pylori (strain ATCC 700392 / 26695) (Campylobacter pylori) protein is UPF0174 protein HP_1587.